A 931-amino-acid chain; its full sequence is Chitin synthase III (931 aa).

2 N-linked (GlcNAc...) asparagine glycosylation sites follow: asparagine 37 and asparagine 94. The tract at residues proline 93–leucine 154 is disordered. Positions glycine 102–glycine 122 are enriched in gly residues. N-linked (GlcNAc...) asparagine glycosylation is present at asparagine 558. The next 5 membrane-spanning stretches (helical) occupy residues phenylalanine 585–leucine 605, isoleucine 644–alanine 664, isoleucine 677–leucine 697, valine 731–leucine 751, and serine 759–phenylalanine 779. A glycan (N-linked (GlcNAc...) asparagine) is linked at asparagine 802. The next 2 helical transmembrane spans lie at threonine 858–aspartate 878 and phenylalanine 899–leucine 919.

This sequence belongs to the chitin synthase family. Class III subfamily. In terms of tissue distribution, highly expressed in conidia and during appressorium formation.

Its subcellular location is the cell membrane. The enzyme catalyses [(1-&gt;4)-N-acetyl-beta-D-glucosaminyl](n) + UDP-N-acetyl-alpha-D-glucosamine = [(1-&gt;4)-N-acetyl-beta-D-glucosaminyl](n+1) + UDP + H(+). Polymerizes chitin, a structural polymer of the cell wall and septum, by transferring the sugar moiety of UDP-GlcNAc to the non-reducing end of the growing chitin polymer. Contributes to the production of conidia and the ability of fungal conidia to germinate. Involved in the fungal cell wall integrity and the ability of conidia to withstand biophysical pressure. Required for appressorium formation and evasion of insect cellular and/or humoral defenses, promoting the fungal dimorphic transition to the production of hyphal bodies that occurs within hosts, and ultimately to virulence. The chain is Chitin synthase III from Metarhizium acridum (strain CQMa 102).